Here is a 71-residue protein sequence, read N- to C-terminus: Gas vesicle protein A (71 aa).

Residues 12–22 form an alpha helix 1 region; that stretch reads LAEVIDRILDK. The interval 26-34 is beta-strand 1; that stretch reads VDAWVRVSL. Residues 35 to 37 form a beta turn region; it reads VGI. The interval 38–46 is beta-strand 2; it reads ELLAIEARI. The alpha helix 2 stretch occupies residues 51–70; the sequence is VETYLKYAEAVGLTQSAAVP.

The protein belongs to the gas vesicle GvpA family. In terms of assembly, the gas vesicle shell is 2 nm thick and consists of a single layer of this protein. It forms helical ribs nearly perpendicular to the long axis of the vesicle.

It localises to the gas vesicle shell. Functionally, gas vesicles are hollow, gas filled proteinaceous nanostructures found in some microorganisms. During planktonic growth they allow positioning of the organism at a favorable depth for light or nutrient acquisition. GvpA forms the protein shell. The protein is Gas vesicle protein A of Microchaete diplosiphon (Fremyella diplosiphon).